The following is a 135-amino-acid chain: MVKIRLRRAGRKKMPVYQIVAADARAPRDGKFLEVIGRYQPTAKPHSITIDKERVEYWLGVGAQPTTTAQSLLRATGLLYEMNLKRKGRSEEEIVSEMAQWQERQSARLQKRLAVKARRRQAKKDAQAAAAASAE.

The protein belongs to the bacterial ribosomal protein bS16 family.

The polypeptide is Small ribosomal subunit protein bS16 (Prosthecochloris aestuarii (strain DSM 271 / SK 413)).